Reading from the N-terminus, the 460-residue chain is Probable serine/threonine-protein kinase kinase DDB_G0280557 (460 aa).

One can recognise a Protein kinase domain in the interval 102–416 (INLKSITDCG…IDQLLAHKYF (315 aa)). ATP is bound by residues Lys131 and 154-162 (QRHFQQHPL). Asp250 functions as the Proton acceptor in the catalytic mechanism.

It belongs to the protein kinase superfamily. CMGC Ser/Thr protein kinase family. MAP kinase subfamily.

It catalyses the reaction L-seryl-[protein] + ATP = O-phospho-L-seryl-[protein] + ADP + H(+). It carries out the reaction L-threonyl-[protein] + ATP = O-phospho-L-threonyl-[protein] + ADP + H(+). The chain is Probable serine/threonine-protein kinase kinase DDB_G0280557 from Dictyostelium discoideum (Social amoeba).